We begin with the raw amino-acid sequence, 878 residues long: Phosphoenolpyruvate carboxylase (878 aa).

Active-site residues include His137 and Lys545.

It belongs to the PEPCase type 1 family. The cofactor is Mg(2+).

The catalysed reaction is oxaloacetate + phosphate = phosphoenolpyruvate + hydrogencarbonate. Forms oxaloacetate, a four-carbon dicarboxylic acid source for the tricarboxylic acid cycle. This is Phosphoenolpyruvate carboxylase from Proteus mirabilis (strain HI4320).